Consider the following 300-residue polypeptide: Ribosomal protein L11 methyltransferase (300 aa).

Positions 152, 173, 195, and 234 each coordinate S-adenosyl-L-methionine.

This sequence belongs to the methyltransferase superfamily. PrmA family.

The protein resides in the cytoplasm. The catalysed reaction is L-lysyl-[protein] + 3 S-adenosyl-L-methionine = N(6),N(6),N(6)-trimethyl-L-lysyl-[protein] + 3 S-adenosyl-L-homocysteine + 3 H(+). Its function is as follows. Methylates ribosomal protein L11. In Cupriavidus necator (strain ATCC 17699 / DSM 428 / KCTC 22496 / NCIMB 10442 / H16 / Stanier 337) (Ralstonia eutropha), this protein is Ribosomal protein L11 methyltransferase.